Consider the following 22-residue polypeptide: 2.39 kDa venom peptide (22 aa).

Post-translationally, contains 2 disulfide bonds. In terms of tissue distribution, expressed by the venom gland.

It is found in the secreted. Functionally, not lethal to mice by intraperitoneal or intracerebroventricular injections in doses up to 100 micrograms. This chain is 2.39 kDa venom peptide, found in Heterometrus spinifer (Asia giant forest scorpion).